The following is a 100-amino-acid chain: Osteocalcin (100 aa).

The first 23 residues, 1–23, serve as a signal peptide directing secretion; it reads MRALTLLALLALAALCITGQAGA. The propeptide occupies 24-51; the sequence is KPSGADSSKGAAFVSKQEGSEVVKRPRR. The region spanning 52–98 is the Gla domain; the sequence is YLYQWLGAPVPYPDPLEPKREVCELNPDCDELADHIGFQEAYRRFYG. Ca(2+) is bound by residues Glu68, Glu72, Glu75, and Asp81. A 4-carboxyglutamate mark is found at Glu68, Glu72, and Glu75. Residues Cys74 and Cys80 are joined by a disulfide bond.

The protein belongs to the osteocalcin/matrix Gla protein family. Gamma-carboxyglutamate residues are formed by vitamin K dependent carboxylation by GGCX. These residues are essential for the binding of calcium. Decarboxylation promotes the hormone activity.

It is found in the secreted. Its function is as follows. The carboxylated form is one of the main organic components of the bone matrix, which constitutes 1-2% of the total bone protein: it acts as a negative regulator of bone formation and is required to limit bone formation without impairing bone resorption or mineralization. The carboxylated form binds strongly to apatite and calcium. In terms of biological role, the uncarboxylated form acts as a hormone secreted by osteoblasts, which regulates different cellular processes, such as energy metabolism, male fertility and brain development. Regulates of energy metabolism by acting as a hormone favoring pancreatic beta-cell proliferation, insulin secretion and sensitivity and energy expenditure. Uncarboxylated osteocalcin hormone also promotes testosterone production in the testes: acts as a ligand for G protein-coupled receptor GPRC6A at the surface of Leydig cells, initiating a signaling response that promotes the expression of enzymes required for testosterone synthesis in a CREB-dependent manner. Also acts as a regulator of brain development: osteocalcin hormone crosses the blood-brain barrier and acts as a ligand for GPR158 on neurons, initiating a signaling response that prevents neuronal apoptosis in the hippocampus, favors the synthesis of all monoamine neurotransmitters and inhibits that of gamma-aminobutyric acid (GABA). Osteocalcin also crosses the placenta during pregnancy and maternal osteocalcin is required for fetal brain development. The protein is Osteocalcin of Pongo pygmaeus (Bornean orangutan).